Reading from the N-terminus, the 97-residue chain is Co-chaperonin GroES (97 aa).

The protein belongs to the GroES chaperonin family. In terms of assembly, heptamer of 7 subunits arranged in a ring. Interacts with the chaperonin GroEL.

The protein resides in the cytoplasm. In terms of biological role, together with the chaperonin GroEL, plays an essential role in assisting protein folding. The GroEL-GroES system forms a nano-cage that allows encapsulation of the non-native substrate proteins and provides a physical environment optimized to promote and accelerate protein folding. GroES binds to the apical surface of the GroEL ring, thereby capping the opening of the GroEL channel. This Azotobacter vinelandii (strain DJ / ATCC BAA-1303) protein is Co-chaperonin GroES.